The sequence spans 723 residues: Dipeptidyl aminopeptidase BI (723 aa).

Residues 1-23 (MKPTSLLLAATVLMSTPITSALA) form the signal peptide. Catalysis depends on charge relay system residues Ser-574, Asp-659, and His-694.

Belongs to the peptidase S9A family. As to quaternary structure, monomer.

With respect to regulation, nearly completely inhibited by 0.5 mM ZnCl(2), 0.1 mM N-tosyl-L-lysyl chloromethyl ketone (TLCK) and 0.1 mM leupeptin. Strongly inhibited by 0.5 mM CoCl(2) and 0.1 mM chymostatin. Activity is hardly affected by general serine protease inhibitors phenylmethanesulfonyl fluoride (PMSF), diisopropyl fluorophosphate (DFP) and N-tosyl-L-phenyl-alanyl chloromethyl ketone (TPCK) or by aspartyl protease inhibitor pepstatin A or by CaCl(2) and EDTA. Cysteine protease inhibitors, such as N-ethylmaleimide (NEM), iodoacetic acid and L-trans-epoxysuccinyl-leucylamido(4-guanido)butane (E-64) have no effect on activity. Functionally, sequentially removes dipeptide units (NH3-P2-P1-) from the amino termini of peptides and proteins. Is able to catalyze the removal of Asp-Arg from the amino termini of angiotensins I and II. Has slight endopeptidase activity on N-terminally blocked peptide derivatives which contain arginine residues at the P1 position. Does not hydrolyze Ala-Ala-Ala and Ala-Ala-Ala-Ala substrates or insulin beta chain. This Pseudoxanthomonas mexicana protein is Dipeptidyl aminopeptidase BI.